A 204-amino-acid polypeptide reads, in one-letter code: Thiamine-phosphate synthase (204 aa).

Residues 37-41 (QVREK) and Asn-69 each bind 4-amino-2-methyl-5-(diphosphooxymethyl)pyrimidine. Residues Asp-70 and Asp-89 each coordinate Mg(2+). Ser-108 serves as a coordination point for 4-amino-2-methyl-5-(diphosphooxymethyl)pyrimidine. 134-136 (TGT) is a binding site for 2-[(2R,5Z)-2-carboxy-4-methylthiazol-5(2H)-ylidene]ethyl phosphate. Lys-137 is a binding site for 4-amino-2-methyl-5-(diphosphooxymethyl)pyrimidine. 2-[(2R,5Z)-2-carboxy-4-methylthiazol-5(2H)-ylidene]ethyl phosphate-binding positions include Gly-165 and 185–186 (IS).

This sequence belongs to the thiamine-phosphate synthase family. The cofactor is Mg(2+).

The catalysed reaction is 2-[(2R,5Z)-2-carboxy-4-methylthiazol-5(2H)-ylidene]ethyl phosphate + 4-amino-2-methyl-5-(diphosphooxymethyl)pyrimidine + 2 H(+) = thiamine phosphate + CO2 + diphosphate. It catalyses the reaction 2-(2-carboxy-4-methylthiazol-5-yl)ethyl phosphate + 4-amino-2-methyl-5-(diphosphooxymethyl)pyrimidine + 2 H(+) = thiamine phosphate + CO2 + diphosphate. The enzyme catalyses 4-methyl-5-(2-phosphooxyethyl)-thiazole + 4-amino-2-methyl-5-(diphosphooxymethyl)pyrimidine + H(+) = thiamine phosphate + diphosphate. It participates in cofactor biosynthesis; thiamine diphosphate biosynthesis; thiamine phosphate from 4-amino-2-methyl-5-diphosphomethylpyrimidine and 4-methyl-5-(2-phosphoethyl)-thiazole: step 1/1. In terms of biological role, condenses 4-methyl-5-(beta-hydroxyethyl)thiazole monophosphate (THZ-P) and 2-methyl-4-amino-5-hydroxymethyl pyrimidine pyrophosphate (HMP-PP) to form thiamine monophosphate (TMP). This is Thiamine-phosphate synthase from Clostridium novyi (strain NT).